Reading from the N-terminus, the 489-residue chain is Transmembrane protein 161A (489 aa).

Positions 1–23 are cleaved as a signal peptide; that stretch reads MAVMGIQMVVTLLVASLMQRVSP. The Extracellular segment spans residues 24 to 98; that stretch reads HYSFGRWLLC…INTMDALVLR (75 aa). N-linked (GlcNAc...) asparagine glycosylation is present at N34. The chain crosses the membrane as a helical span at residues 99–119; sequence YFLEYQWFIDFALYSTIIYLF. The Cytoplasmic segment spans residues 120 to 134; the sequence is TEAYYCVVDAQNEIN. A helical membrane pass occupies residues 135-155; sequence IGVLWCLMSIIFSIKVLFTVM. Topologically, residues 156–166 are extracellular; it reads KHYFRSEEGGE. The helical transmembrane segment at 167 to 187 threads the bilayer; that stretch reads RSVCMTFAFFFLLIAMIVTIV. Over 188–224 the chain is Cytoplasmic; sequence RDEYLEFGLEPGLASVCHNLENFLAQQGWQWSMPFVK. The chain crosses the membrane as a helical span at residues 225–245; that stretch reads LAFKIALVALCAFLGGCLTFP. The Extracellular portion of the chain corresponds to 246–264; the sequence is GLRLAQTHLDALKMAADRP. Residues 265-285 traverse the membrane as a helical segment; the sequence is MLQLLLHMSFLPPVIVVVLWI. Over 286-304 the chain is Cytoplasmic; sequence RPITRDFLLNAPMGKESVE. The chain crosses the membrane as a helical span at residues 305–325; that stretch reads LMSNSAYNTFRLWIIVLLCLL. The Extracellular portion of the chain corresponds to 326–370; it reads RFCLTRFHLQAYLCLADRWVEQMKREAGRISMLEIQRKISRIFCY. A helical membrane pass occupies residues 371–391; the sequence is LTVVALQYLAPVILTFHCVFM. The Cytoplasmic segment spans residues 392-459; it reads LKSLGDYSWG…GLFTPLFFRG (68 aa). The interval 413-432 is disordered; that stretch reads VDSSPVQSHSPTSEEEEDTE. The chain crosses the membrane as a helical span at residues 460–480; it reads IFSFLTWWVSVCQIITSLFGL. Residues 481 to 489 are Extracellular-facing; it reads YFHQYLGAS.

Belongs to the TMEM161 family.

It localises to the membrane. In terms of biological role, may play a role in protection against oxidative stress. The polypeptide is Transmembrane protein 161A (tmem161a) (Xenopus laevis (African clawed frog)).